Reading from the N-terminus, the 420-residue chain is 3-phosphoshikimate 1-carboxyvinyltransferase (420 aa).

3-phosphoshikimate-binding residues include lysine 26, serine 27, and arginine 31. A phosphoenolpyruvate-binding site is contributed by lysine 26. Phosphoenolpyruvate contacts are provided by glycine 97 and arginine 125. Positions 170, 171, 172, 297, 320, and 324 each coordinate 3-phosphoshikimate. Residue glutamine 172 coordinates phosphoenolpyruvate. Aspartate 297 functions as the Proton acceptor in the catalytic mechanism. Phosphoenolpyruvate contacts are provided by arginine 328, arginine 375, and lysine 400.

The protein belongs to the EPSP synthase family. As to quaternary structure, monomer.

The protein localises to the cytoplasm. The enzyme catalyses 3-phosphoshikimate + phosphoenolpyruvate = 5-O-(1-carboxyvinyl)-3-phosphoshikimate + phosphate. It functions in the pathway metabolic intermediate biosynthesis; chorismate biosynthesis; chorismate from D-erythrose 4-phosphate and phosphoenolpyruvate: step 6/7. Catalyzes the transfer of the enolpyruvyl moiety of phosphoenolpyruvate (PEP) to the 5-hydroxyl of shikimate-3-phosphate (S3P) to produce enolpyruvyl shikimate-3-phosphate and inorganic phosphate. This chain is 3-phosphoshikimate 1-carboxyvinyltransferase, found in Rhizobium etli (strain ATCC 51251 / DSM 11541 / JCM 21823 / NBRC 15573 / CFN 42).